A 401-amino-acid chain; its full sequence is O-antigen ligase (401 aa).

Over 1–20 the chain is Cytoplasmic; that stretch reads MFAATRLSRLRHDTSRILSH. Residues 21–37 form a helical membrane-spanning segment; sequence WILPLGWLALLTGMFWV. At 38–42 the chain is on the periplasmic side; sequence GDRSD. A helical membrane pass occupies residues 43-61; it reads YHRLFYILLAAPTLLYVIL. The Cytoplasmic segment spans residues 62 to 72; it reads QPRLLRPLTGS. Residues 73-92 form a helical membrane-spanning segment; that stretch reads PLFIAFLAFSSYMMLSLSWS. At 93 to 103 the chain is on the periplasmic side; the sequence is TPENSTGSLLK. The helical transmembrane segment at 104 to 122 threads the bilayer; the sequence is RPLYIALLFFCAAILALEA. Residues 123–129 lie on the Cytoplasmic side of the membrane; the sequence is PLRLKTA. A helical membrane pass occupies residues 130-150; sequence TWLAALGAVISAAATLLRYYW. The Periplasmic segment spans residues 151-161; that stretch reads DANPLRLTGYG. A helical transmembrane segment spans residues 162–183; sequence ALYNPLLSAHVYGAFTALWLAY. The Cytoplasmic portion of the chain corresponds to 184-189; it reads WMQSRP. The chain crosses the membrane as a helical span at residues 190–208; that stretch reads ILAPLPLISLALLGGLLIA. Over 209–212 the chain is Periplasmic; sequence TGSR. A helical transmembrane segment spans residues 213-229; sequence TPLVGLTAALMWLVLAG. Topologically, residues 230–234 are cytoplasmic; it reads DRKKA. Residues 235-252 form a helical membrane-spanning segment; the sequence is LIALALALAGALLGYILY. Residues 253–306 lie on the Periplasmic side of the membrane; the sequence is PEVITQRGASFRPEIWADALRQISEHPWLGHGYDHPMRIVLSNGMLLADPHNIE. The segment at 258–319 is WZY-C; it reads QRGASFRPEI…LFAGGIIGLL (62 aa). A helical transmembrane segment spans residues 307–331; it reads LGVLFAGGIIGLLLWVAIYALAFGF. The Cytoplasmic portion of the chain corresponds to 332–339; sequence SWKNRKSP. Residues 340–357 traverse the membrane as a helical segment; that stretch reads AVLLASTWLVFGLAAGLT. Residues 358 to 368 lie on the Periplasmic side of the membrane; it reads EGNAFLPRPKE. Residues 369–385 form a helical membrane-spanning segment; the sequence is HWFLIWIPMALLYALWI. The Cytoplasmic segment spans residues 386–401; sequence QQRFAASRRGEDIAAP.

This sequence belongs to the O-antigen ligase family. Homodimer.

The protein resides in the cell inner membrane. It carries out the reaction a lipid-linked O antigen + a lipid A-core oligosaccharide = a lipopolysaccharide + a polyisoprenyl diphosphate.. Its pathway is bacterial outer membrane biogenesis; lipopolysaccharide biosynthesis. With respect to regulation, activity does not require ATP and magnesium ions. In terms of biological role, transferase involved in the biosynthesis of the lipopolysaccharide (LPS). Catalyzes the transfer of a polymerized O-antigen molecule from its polyprenyl diphosphate membrane anchor to a terminal sugar of the lipid A-core oligosaccharide, finalizing the biosynthesis of the lipopolysaccharide. Required for the attachment of both A-band and B-band O-antigens, two forms of O-antigen produced by P.aeruginosa, onto the lipid A-core receptors. Important for cell wall integrity and motility of the bacteria. The chain is O-antigen ligase from Pseudomonas aeruginosa (strain ATCC 15692 / DSM 22644 / CIP 104116 / JCM 14847 / LMG 12228 / 1C / PRS 101 / PAO1).